The chain runs to 109 residues: MRGALLVLALLVTQALGVKMAETCPIFYDVFFAVANGNELLLDLSLTKVNATEPERTAMKKIQDCYVENGLISRVLDGLVMTTISSSKDCMGEAVQNTVEDLKLNTLGR.

An N-terminal signal peptide occupies residues 1-17 (MRGALLVLALLVTQALG). N50 carries an N-linked (GlcNAc...) asparagine glycan.

Belongs to the secretoglobin family. As to quaternary structure, heterotetramer composed of two non-covalently linked disulfide-linked heterodimer of chains 1 and 2. In terms of tissue distribution, the long form is preferentially expressed in the salivary gland, while the short form is preferentially expressed in the skin.

Its subcellular location is the secreted. This chain is Major allergen I polypeptide chain 2 (CH2), found in Felis catus (Cat).